Reading from the N-terminus, the 562-residue chain is Arginine--tRNA ligase (562 aa).

The 'HIGH' region motif lies at 121-131; the sequence is PNIAKPMGMGH.

Belongs to the class-I aminoacyl-tRNA synthetase family. Monomer.

The protein resides in the cytoplasm. It catalyses the reaction tRNA(Arg) + L-arginine + ATP = L-arginyl-tRNA(Arg) + AMP + diphosphate. The protein is Arginine--tRNA ligase of Limosilactobacillus reuteri (strain DSM 20016) (Lactobacillus reuteri).